Here is a 361-residue protein sequence, read N- to C-terminus: Beta-hexosaminidase (361 aa).

Substrate contacts are provided by residues aspartate 69, arginine 77, arginine 144, and 174-175; that span reads KH. Histidine 187 acts as the Proton donor/acceptor in catalysis. The active-site Nucleophile is the aspartate 258.

It belongs to the glycosyl hydrolase 3 family. NagZ subfamily.

The protein resides in the cytoplasm. It catalyses the reaction Hydrolysis of terminal non-reducing N-acetyl-D-hexosamine residues in N-acetyl-beta-D-hexosaminides.. It functions in the pathway cell wall biogenesis; peptidoglycan recycling. Plays a role in peptidoglycan recycling by cleaving the terminal beta-1,4-linked N-acetylglucosamine (GlcNAc) from peptide-linked peptidoglycan fragments, giving rise to free GlcNAc, anhydro-N-acetylmuramic acid and anhydro-N-acetylmuramic acid-linked peptides. The protein is Beta-hexosaminidase of Neisseria meningitidis serogroup B (strain ATCC BAA-335 / MC58).